The chain runs to 311 residues: Retron Ec78 reverse transcriptase (311 aa).

Positions 15–241 constitute a Reverse transcriptase domain; that stretch reads DSGISAFLVT…HNRHVTGVTI (227 aa). Mg(2+)-binding residues include Asp96, Asp187, and Asp188.

Belongs to the bacterial reverse transcriptase family.

It catalyses the reaction DNA(n) + a 2'-deoxyribonucleoside 5'-triphosphate = DNA(n+1) + diphosphate. Reverse transcriptase (RT) component of antiviral defense system retron Ec78, composed of a non-coding RNA (ncRNA), this reverse transcriptase (RT), a probable ATPase and a putative HNH endonuclease. Expression of retron Ec78 confers protection against bacteriophage T5. At multiplicity of infection (MOI) of 0.02 cultures slow growth when infected with T5 but do not collapse, at MOI 2 cultures enter growth stasis. Responsible for synthesis of msDNA-Ec78 (a linear ssDNA with a 5'-terminal phosphate residue). Unlike most known msDNAs the mature product does not have an RNA component. The retron transcript serves as primer and template for the reaction, and codes for the RT. Not mutagenic when cloned in E.coli. It is thought to be synthesized as a branched RNA with a 2',5'-phosphodiester linkage to ssDNA; the linkage is cleaved endonucleolytically by ExoVII (xseA-xseB) leaving the observed mature 5'-ssDNA terminus. Overexpression of the ncRNA and RT, which leads to increased levels of msDNA, is not mutagenic in vivo. As the stem in the msDNA does not have a mismatch it probably does not bind or sequester MutS and/or MutL. This chain is Retron Ec78 reverse transcriptase, found in Escherichia coli.